The sequence spans 144 residues: MCHAREASPGTGEPEAAPRDNFPRAAGSKRGVGAAFETRAQRFLERAGLALVARNVTVRGGEIDLVMRERDGTLVFVEVRARANSRYGGAAASIGVRKRMRLLLAAHAFWARTGGANACRFDVVAFEGGRLVWLRDAFRADDAG.

A disordered region spans residues 1–28; it reads MCHAREASPGTGEPEAAPRDNFPRAAGS.

The protein belongs to the UPF0102 family.

This Burkholderia mallei (strain ATCC 23344) protein is UPF0102 protein BMA2801.